The chain runs to 212 residues: Mediator of RNA polymerase II transcription subunit 20 (212 aa).

It belongs to the Mediator complex subunit 20 family. Component of the Mediator complex, which is composed of MED1, MED4, MED6, MED7, MED8, MED9, MED10, MED11, MED12, MED13, MED13L, MED14, MED15, MED16, MED17, MED18, MED19, MED20, MED21, MED22, MED23, MED24, MED25, MED26, MED27, MED29, MED30, MED31, CCNC, CDK8 and CDC2L6/CDK11. The MED12, MED13, CCNC and CDK8 subunits form a distinct module termed the CDK8 module. Mediator containing the CDK8 module is less active than Mediator lacking this module in supporting transcriptional activation. Individual preparations of the Mediator complex lacking one or more distinct subunits have been variously termed ARC, CRSP, DRIP, PC2, SMCC and TRAP. Interacts with PPARG.

The protein localises to the nucleus. Component of the Mediator complex, a coactivator involved in the regulated transcription of nearly all RNA polymerase II-dependent genes. Mediator functions as a bridge to convey information from gene-specific regulatory proteins to the basal RNA polymerase II transcription machinery. Mediator is recruited to promoters by direct interactions with regulatory proteins and serves as a scaffold for the assembly of a functional preinitiation complex with RNA polymerase II and the general transcription factors. The sequence is that of Mediator of RNA polymerase II transcription subunit 20 (Med20) from Mus musculus (Mouse).